Reading from the N-terminus, the 392-residue chain is Spermatogenesis associated 6-like protein (392 aa).

Phosphoserine is present on residues Ser260 and Ser263. Residues 286–301 are compositionally biased toward low complexity; that stretch reads SCLDSSQFGKSSSSKQ. The interval 286-305 is disordered; that stretch reads SCLDSSQFGKSSSSKQGDAD.

Belongs to the SPATA6 family.

The chain is Spermatogenesis associated 6-like protein (SPATA6L) from Homo sapiens (Human).